The following is a 1108-amino-acid chain: Multidrug resistance regulator 1 (1108 aa).

The span at 1-19 (MSIATTPIETPKSPKSTEP) shows a compositional bias: polar residues. The disordered stretch occupies residues 1-27 (MSIATTPIETPKSPKSTEPQVRKRKKV). The zn(2)-C6 fungal-type DNA-binding region spans 31 to 59 (CTNCRKRKIRCDRQHPCNNCIKSKKHNAC). Residues 68 to 83 (PANFSTNGSSHGNTVP) show a composition bias toward polar residues. Disordered regions lie at residues 68–138 (PANF…SENE), 968–990 (DQTYSTSSESSSTPNKDSPLDSR), and 1021–1064 (AQQQ…YYGN). 2 stretches are compositionally biased toward basic and acidic residues: residues 86–104 (RPYEESARIPIRFDAEAPR) and 114–123 (NERKNSKKSP). The span at 124–138 (DNTVANNQQTASENE) shows a compositional bias: polar residues. The stretch at 134-165 (ASENEVTITLSELNMLKQRLQNIEANINAQSN) forms a coiled coil. Low complexity-rich tracts occupy residues 970–980 (TYSTSSESSST) and 1023–1041 (QQRQQESQPFTSSQSQSQS).

It localises to the nucleus. Its function is as follows. Transcription factor that acts as the central regulator of the MDR1 efflux pump. Other target genes include those encoding oxidoreductases, whose up-regulation in fluconazole-resistant isolates may help to prevent cell damage resulting from the generation of toxic molecules in the presence of fluconazole and thereby contribute to drug resistance. This is Multidrug resistance regulator 1 from Candida albicans (strain SC5314 / ATCC MYA-2876) (Yeast).